A 198-amino-acid chain; its full sequence is Recombination protein RecR (198 aa).

Residues 57-72 (CSVCGHITDKDPCYIC) form a C4-type zinc finger. The Toprim domain occupies 80 to 175 (SVICVVQESK…KVTRIAHGLP (96 aa)).

It belongs to the RecR family.

May play a role in DNA repair. It seems to be involved in an RecBC-independent recombinational process of DNA repair. It may act with RecF and RecO. In Listeria welshimeri serovar 6b (strain ATCC 35897 / DSM 20650 / CCUG 15529 / CIP 8149 / NCTC 11857 / SLCC 5334 / V8), this protein is Recombination protein RecR.